The primary structure comprises 551 residues: E-selectin (551 aa).

Residues 1–23 (MVASWLLSTLTFALVLLIKETST) form the signal peptide. Residues 24 to 141 (WTYHFSAENM…CSKKKLALCY (118 aa)) form the C-type lectin domain. The Extracellular segment spans residues 24-495 (WTYHFSAENM…CEEPIASNVP (472 aa)). N-linked (GlcNAc...) asparagine glycosylation is found at asparagine 32 and asparagine 45. 17 cysteine pairs are disulfide-bonded: cysteine 42–cysteine 140, cysteine 113–cysteine 132, cysteine 145–cysteine 156, cysteine 150–cysteine 165, cysteine 167–cysteine 176, cysteine 182–cysteine 226, cysteine 195–cysteine 208, cysteine 212–cysteine 239, cysteine 244–cysteine 288, cysteine 257–cysteine 270, cysteine 274–cysteine 301, cysteine 306–cysteine 351, cysteine 337–cysteine 364, cysteine 369–cysteine 414, cysteine 400–cysteine 427, cysteine 432–cysteine 473, and cysteine 459–cysteine 486. Residues glutamate 103, asparagine 105, and glutamate 111 each coordinate Ca(2+). A carbohydrate-binding positions include 103-111 (EPNNKQNNE), 115-120 (EIYIKR), and 128-130 (NDE). Asparagine 128 and aspartate 129 together coordinate Ca(2+). One can recognise an EGF-like domain in the interval 142–177 (TAACTEASCSGHGECIETINNYSCKCYPGFSGLKCE). Asparagine 162 carries N-linked (GlcNAc...) asparagine glycosylation. Sushi domains are found at residues 180–241 (VTCE…TCKV), 242–303 (VECD…TCKA), 305–366 (SCDT…VCEA), 368–429 (KCDP…SCQV), and 430–488 (VQCP…TCEE). Asparagine 194, asparagine 201, and asparagine 205 each carry an N-linked (GlcNAc...) asparagine glycan. N-linked (GlcNAc...) asparagine glycosylation occurs at asparagine 267. Asparagine 314, asparagine 321, and asparagine 334 each carry an N-linked (GlcNAc...) asparagine glycan. Asparagine 442 and asparagine 466 each carry an N-linked (GlcNAc...) asparagine glycan. Residues 496–517 (LAVGLSVSGTSFLTLTSFLLWF) form a helical membrane-spanning segment. The Cytoplasmic segment spans residues 518–551 (LKYFRKKAKKFVPASSRYVGLEAHGNCQVPSHLI).

It belongs to the selectin/LECAM family. As to quaternary structure, interacts with SELPLG/PSGL1 and PODXL2 through the sialyl Lewis X epitope. SELPLG sulfation appears not to be required for this interaction.

The protein localises to the cell membrane. In terms of biological role, cell-surface glycoprotein having a role in immunoadhesion. Mediates in the adhesion of blood neutrophils in cytokine-activated endothelium through interaction with SELPLG/PSGL1. May have a role in capillary morphogenesis. This chain is E-selectin (SELE), found in Oryctolagus cuniculus (Rabbit).